The sequence spans 243 residues: Ice-binding protein K3-B1 (243 aa).

The first 20 residues, 1–20 (MFSASSLLAVIALAISSVSA), serve as a signal peptide directing secretion.

It belongs to the ice-binding protein family.

In terms of biological role, binds to the surface of ice crystals. Has low thermal hysteresis (TH) activity, which is the ability to lower the freezing point of an aqueous solution below its melting point. The TH activity of this protein is approximately 0.3 degrees Celsius at 11 mM. In Typhula ishikariensis (Gray snow mold fungus), this protein is Ice-binding protein K3-B1.